A 736-amino-acid chain; its full sequence is Na(+)/H(+) antiporter NhaA (736 aa).

A na(+)/H(+) antiporter NhaA region spans residues 1–387; sequence MNHSPQSARP…ICGYLLLRAA (387 aa). Helical transmembrane passes span 23-43, 58-78, 96-116, 126-146, 155-175, 178-198, 201-221, 265-285, 298-318, 334-354, and 367-387; these read AGGI…NSPF, LSLA…LVGL, MLPG…FAVL, GWAV…SLLG, VFLA…IAIF, AEIS…LFVM, MDVV…FFVF, VAFI…FKGL, ILLG…WLAI, LYGV…IGLL, and IGVL…LRAA. A peptidase S49 region spans residues 388-736; sequence RPDQSAANPL…EKAIWARYGL (349 aa).

The protein in the N-terminal section; belongs to the NhaA Na(+)/H(+) (TC 2.A.33) antiporter family. In the C-terminal section; belongs to the peptidase S49 family.

The protein resides in the cell inner membrane. It catalyses the reaction Na(+)(in) + 2 H(+)(out) = Na(+)(out) + 2 H(+)(in). Na(+)/H(+) antiporter that extrudes sodium in exchange for external protons. The sequence is that of Na(+)/H(+) antiporter NhaA from Brucella melitensis biotype 1 (strain ATCC 23456 / CCUG 17765 / NCTC 10094 / 16M).